Reading from the N-terminus, the 247-residue chain is Cell division protein ZapD (247 aa).

Belongs to the ZapD family. In terms of assembly, interacts with FtsZ.

Its subcellular location is the cytoplasm. Cell division factor that enhances FtsZ-ring assembly. Directly interacts with FtsZ and promotes bundling of FtsZ protofilaments, with a reduction in FtsZ GTPase activity. In Citrobacter koseri (strain ATCC BAA-895 / CDC 4225-83 / SGSC4696), this protein is Cell division protein ZapD.